The sequence spans 204 residues: dITP/XTP pyrophosphatase (204 aa).

A substrate-binding site is contributed by 11-16; that stretch reads SRNRKK. Aspartate 76 serves as the catalytic Proton acceptor. Aspartate 76 is a Mg(2+) binding site. Residues serine 77, 158–161, lysine 181, and 186–187 contribute to the substrate site; these read FGYD and HR.

The protein belongs to the HAM1 NTPase family. In terms of assembly, homodimer. The cofactor is Mg(2+).

The enzyme catalyses XTP + H2O = XMP + diphosphate + H(+). It carries out the reaction dITP + H2O = dIMP + diphosphate + H(+). It catalyses the reaction ITP + H2O = IMP + diphosphate + H(+). Pyrophosphatase that catalyzes the hydrolysis of nucleoside triphosphates to their monophosphate derivatives, with a high preference for the non-canonical purine nucleotides XTP (xanthosine triphosphate), dITP (deoxyinosine triphosphate) and ITP. Seems to function as a house-cleaning enzyme that removes non-canonical purine nucleotides from the nucleotide pool, thus preventing their incorporation into DNA/RNA and avoiding chromosomal lesions. The chain is dITP/XTP pyrophosphatase from Mycobacterium tuberculosis (strain CDC 1551 / Oshkosh).